We begin with the raw amino-acid sequence, 236 residues long: ATP phosphoribosyltransferase (236 aa).

Belongs to the ATP phosphoribosyltransferase family. Short subfamily. Heteromultimer composed of HisG and HisZ subunits.

The protein resides in the cytoplasm. The catalysed reaction is 1-(5-phospho-beta-D-ribosyl)-ATP + diphosphate = 5-phospho-alpha-D-ribose 1-diphosphate + ATP. It participates in amino-acid biosynthesis; L-histidine biosynthesis; L-histidine from 5-phospho-alpha-D-ribose 1-diphosphate: step 1/9. Functionally, catalyzes the condensation of ATP and 5-phosphoribose 1-diphosphate to form N'-(5'-phosphoribosyl)-ATP (PR-ATP). Has a crucial role in the pathway because the rate of histidine biosynthesis seems to be controlled primarily by regulation of HisG enzymatic activity. The sequence is that of ATP phosphoribosyltransferase (hisG) from Cereibacter sphaeroides (strain ATCC 17023 / DSM 158 / JCM 6121 / CCUG 31486 / LMG 2827 / NBRC 12203 / NCIMB 8253 / ATH 2.4.1.) (Rhodobacter sphaeroides).